Reading from the N-terminus, the 244-residue chain is Type III pantothenate kinase (244 aa).

11 to 18 provides a ligand contact to ATP; sequence DAGNTSIK. Substrate is bound by residues Tyr90 and 97–100; that span reads GIDR. The active-site Proton acceptor is the Asp99. Asp119 lines the K(+) pocket. Residue Thr122 coordinates ATP. Thr175 is a binding site for substrate.

It belongs to the type III pantothenate kinase family. As to quaternary structure, homodimer. The cofactor is NH4(+). It depends on K(+) as a cofactor.

The protein resides in the cytoplasm. It catalyses the reaction (R)-pantothenate + ATP = (R)-4'-phosphopantothenate + ADP + H(+). The protein operates within cofactor biosynthesis; coenzyme A biosynthesis; CoA from (R)-pantothenate: step 1/5. Functionally, catalyzes the phosphorylation of pantothenate (Pan), the first step in CoA biosynthesis. This chain is Type III pantothenate kinase, found in Marinomonas sp. (strain MWYL1).